The sequence spans 372 residues: Protein RecA (372 aa).

Residue 66 to 73 participates in ATP binding; the sequence is GPESSGKT. The interval 328–359 is disordered; it reads GVGVRPEEPTATESGPDAATAESAPAVPAPAT. Residues 345 to 359 are compositionally biased toward low complexity; the sequence is AATAESAPAVPAPAT.

This sequence belongs to the RecA family.

The protein resides in the cytoplasm. Functionally, can catalyze the hydrolysis of ATP in the presence of single-stranded DNA, the ATP-dependent uptake of single-stranded DNA by duplex DNA, and the ATP-dependent hybridization of homologous single-stranded DNAs. It interacts with LexA causing its activation and leading to its autocatalytic cleavage. In Streptomyces ambofaciens, this protein is Protein RecA.